We begin with the raw amino-acid sequence, 295 residues long: N-acetylmuramic acid 6-phosphate etherase (295 aa).

In terms of domain architecture, SIS spans 54 to 217 (VIASFRQGGR…STASMIGIGK (164 aa)). Residue glutamate 82 is the Proton donor of the active site. Glutamate 113 is a catalytic residue.

It belongs to the GCKR-like family. MurNAc-6-P etherase subfamily. In terms of assembly, homodimer.

It catalyses the reaction N-acetyl-D-muramate 6-phosphate + H2O = N-acetyl-D-glucosamine 6-phosphate + (R)-lactate. The protein operates within amino-sugar metabolism; N-acetylmuramate degradation. Specifically catalyzes the cleavage of the D-lactyl ether substituent of MurNAc 6-phosphate, producing GlcNAc 6-phosphate and D-lactate. The polypeptide is N-acetylmuramic acid 6-phosphate etherase (Geobacillus sp. (strain WCH70)).